A 398-amino-acid polypeptide reads, in one-letter code: MGLVDSLLGKDARKFLKRKDSDAAEAGRALEELRSSLYNELKTSEGAKRQQQRFCGPVVAMSFNFVVAVGIILANKLVMGRVGFNFPIFLTLIHYTVAWILLAFFKSLSLLPMSPPSKTTPFSSLFSLGAVMAFASGLANTSLKHNSVGFYQMAKIAVTPTIVLAEFVLFKKTISSTKVMALAVVSLGVAIATVTDLEFNLFGALVAVAWIIPSAINKILWSNLQQQANWTALALMWKTTPFTVFFLLALMPWLDPPGVLLFKWDLTNSSAILISALLGFLLQWSGALALGATSATSHVVLGQFKTCVILLGGYVIFGSDPGFISICGAIAALGGMSVYTWLNLPGKSIDHMSNKQLPKQNVTVSKPKAEADDGGGETGVTVVSVDPLLSKTITANIV.

The next 10 helical transmembrane spans lie at 54 to 74, 84 to 104, 119 to 139, 150 to 170, 179 to 199, 201 to 221, 242 to 262, 271 to 291, 299 to 319, and 322 to 342; these read FCGP…IILA, FNFP…LLAF, TTPF…SGLA, FYQM…FVLF, VMAL…DLEF, LFGA…KILW, FTVF…VLLF, AILI…LALG, VVLG…IFGS, and GFIS…YTWL.

The protein belongs to the TPT transporter family. TPT (TC 2.A.7.9) subfamily.

It localises to the membrane. This Arabidopsis thaliana (Mouse-ear cress) protein is Nucleotide-sugar uncharacterized transporter 2.